Here is a 201-residue protein sequence, read N- to C-terminus: Large ribosomal subunit protein uL4 (201 aa).

Residues 39–72 (RRGTASTKTRAQVSKSGKKMYSQKGTGNARHGDR) form a disordered region. Polar residues predominate over residues 42-53 (TASTKTRAQVSK).

Belongs to the universal ribosomal protein uL4 family. Part of the 50S ribosomal subunit.

In terms of biological role, one of the primary rRNA binding proteins, this protein initially binds near the 5'-end of the 23S rRNA. It is important during the early stages of 50S assembly. It makes multiple contacts with different domains of the 23S rRNA in the assembled 50S subunit and ribosome. Forms part of the polypeptide exit tunnel. The sequence is that of Large ribosomal subunit protein uL4 from Deinococcus deserti (strain DSM 17065 / CIP 109153 / LMG 22923 / VCD115).